The primary structure comprises 512 residues: Maturase K (512 aa).

The protein belongs to the intron maturase 2 family. MatK subfamily.

Its subcellular location is the plastid. It localises to the chloroplast. In terms of biological role, usually encoded in the trnK tRNA gene intron. Probably assists in splicing its own and other chloroplast group II introns. The protein is Maturase K of Soldanella alpina (Alpine snowbell).